Here is a 388-residue protein sequence, read N- to C-terminus: Diphosphomevalonate decarboxylase (388 aa).

Residues 19-22 (YWGK), arginine 74, 153-158 (SGSACR), and threonine 209 each bind (R)-5-diphosphomevalonate. Residues 367 to 388 (QGPQGSSESLINDKGLPKAVAN) are disordered.

It belongs to the diphosphomevalonate decarboxylase family. In terms of assembly, homodimer.

It carries out the reaction (R)-5-diphosphomevalonate + ATP = isopentenyl diphosphate + ADP + phosphate + CO2. It participates in isoprenoid biosynthesis; isopentenyl diphosphate biosynthesis via mevalonate pathway; isopentenyl diphosphate from (R)-mevalonate: step 3/3. Its function is as follows. Diphosphomevalonate decarboxylase; part of the second module of ergosterol biosynthesis pathway that includes the middle steps of the pathway. The second module is carried out in the vacuole and involves the formation of farnesyl diphosphate, which is also an important intermediate in the biosynthesis of ubiquinone, dolichol, heme and prenylated proteins. Activity by the mevalonate kinase ERG12 first converts mevalonate into 5-phosphomevalonate. 5-phosphomevalonate is then further converted to 5-diphosphomevalonate by the phosphomevalonate kinase ERG8. The diphosphomevalonate decarboxylase MVD1/ERG19 then produces isopentenyl diphosphate. The isopentenyl-diphosphate delta-isomerase IDI1 then catalyzes the 1,3-allylic rearrangement of the homoallylic substrate isopentenyl (IPP) to its highly electrophilic allylic isomer, dimethylallyl diphosphate (DMAPP). Finally the farnesyl diphosphate synthase ERG20 catalyzes the sequential condensation of isopentenyl pyrophosphate with dimethylallyl pyrophosphate, and then with the resultant geranylpyrophosphate to the ultimate product farnesyl pyrophosphate. This chain is Diphosphomevalonate decarboxylase, found in Debaryomyces hansenii (strain ATCC 36239 / CBS 767 / BCRC 21394 / JCM 1990 / NBRC 0083 / IGC 2968) (Yeast).